A 362-amino-acid chain; its full sequence is Cobalt-precorrin-5B C(1)-methyltransferase (362 aa).

It belongs to the CbiD family.

The enzyme catalyses Co-precorrin-5B + S-adenosyl-L-methionine = Co-precorrin-6A + S-adenosyl-L-homocysteine. It participates in cofactor biosynthesis; adenosylcobalamin biosynthesis; cob(II)yrinate a,c-diamide from sirohydrochlorin (anaerobic route): step 6/10. Its function is as follows. Catalyzes the methylation of C-1 in cobalt-precorrin-5B to form cobalt-precorrin-6A. The polypeptide is Cobalt-precorrin-5B C(1)-methyltransferase (Geobacter sulfurreducens (strain ATCC 51573 / DSM 12127 / PCA)).